Here is a 128-residue protein sequence, read N- to C-terminus: Probable 4-amino-4-deoxy-L-arabinose-phosphoundecaprenol flippase subunit ArnF (128 aa).

A helical transmembrane segment spans residues 1–21; the sequence is MGLMWGLFSVIIASAAQLSLG. Residues 22 to 35 are Periplasmic-facing; the sequence is YAASHLPPMTQFWD. The helical transmembrane segment at 36 to 56 threads the bilayer; sequence FIAAFFAFGPGARMLVVGLVG. Residues 57-76 are Cytoplasmic-facing; sequence YLLSVFCWYKALHQLALSKA. Residues 77-97 traverse the membrane as a helical segment; it reads YALLSMSYVLVWIASMVLPGW. Over 98 to 100 the chain is Periplasmic; that stretch reads EGT. A helical membrane pass occupies residues 101 to 121; the sequence is FSLKALLGVACIMSGLMLIFL. The Cytoplasmic portion of the chain corresponds to 122 to 128; it reads PTTKQRY.

Belongs to the ArnF family. In terms of assembly, heterodimer of ArnE and ArnF.

It is found in the cell inner membrane. It functions in the pathway bacterial outer membrane biogenesis; lipopolysaccharide biosynthesis. Its function is as follows. Translocates 4-amino-4-deoxy-L-arabinose-phosphoundecaprenol (alpha-L-Ara4N-phosphoundecaprenol) from the cytoplasmic to the periplasmic side of the inner membrane. This Escherichia fergusonii (strain ATCC 35469 / DSM 13698 / CCUG 18766 / IAM 14443 / JCM 21226 / LMG 7866 / NBRC 102419 / NCTC 12128 / CDC 0568-73) protein is Probable 4-amino-4-deoxy-L-arabinose-phosphoundecaprenol flippase subunit ArnF.